Here is a 358-residue protein sequence, read N- to C-terminus: Magnesium-protoporphyrin IX monomethyl ester [oxidative] cyclase (358 aa).

This sequence belongs to the AcsF family. Fe cation serves as cofactor.

It carries out the reaction Mg-protoporphyrin IX 13-monomethyl ester + 3 NADPH + 3 O2 + 2 H(+) = 3,8-divinyl protochlorophyllide a + 3 NADP(+) + 5 H2O. It functions in the pathway porphyrin-containing compound metabolism; chlorophyll biosynthesis (light-independent). In terms of biological role, catalyzes the formation of the isocyclic ring in chlorophyll biosynthesis. Mediates the cyclase reaction, which results in the formation of divinylprotochlorophyllide (Pchlide) characteristic of all chlorophylls from magnesium-protoporphyrin IX 13-monomethyl ester (MgPMME). The polypeptide is Magnesium-protoporphyrin IX monomethyl ester [oxidative] cyclase (Synechococcus elongatus (strain ATCC 33912 / PCC 7942 / FACHB-805) (Anacystis nidulans R2)).